A 161-amino-acid chain; its full sequence is Cytochrome c-type biogenesis protein CcmE (161 aa).

At 1–8 (MNPRRKKR) the chain is on the cytoplasmic side. A helical; Signal-anchor for type II membrane protein membrane pass occupies residues 9-29 (LTLAIALIGGVAAIASLLLYA). The Periplasmic portion of the chain corresponds to 30–161 (LNSNLNLFYT…DYSQQKSAAQ (132 aa)). Heme contacts are provided by His-131 and Tyr-135. The segment at 138–161 (PEVAEAMGQKHEKLDYSQQKSAAQ) is disordered.

The protein belongs to the CcmE/CycJ family.

It is found in the cell inner membrane. Its function is as follows. Heme chaperone required for the biogenesis of c-type cytochromes. Transiently binds heme delivered by CcmC and transfers the heme to apo-cytochromes in a process facilitated by CcmF and CcmH. The sequence is that of Cytochrome c-type biogenesis protein CcmE from Shewanella sp. (strain MR-4).